A 275-amino-acid chain; its full sequence is Large ribosomal subunit protein uL2c (275 aa).

Positions Ala225 to Leu256 are disordered.

Belongs to the universal ribosomal protein uL2 family. Part of the 50S ribosomal subunit.

It localises to the plastid. It is found in the chloroplast. The protein is Large ribosomal subunit protein uL2c (rpl2) of Cyanidium caldarium (Red alga).